A 548-amino-acid chain; its full sequence is MAGLRARRGPAPGLLALSALGFCLMLQVSAKRLPKTPPCPPSCSCTRDTAFCVDSKAVPRNLPSEVISLTLVNAAFSEIHDGAFSHLPLLQFLLLNSNKFTLIGDNAFTGLSHLQYLFIENNDIWTLSKFTFRGLKSLTHLSLANNNLQTLPRDIFRPLDILNDLDLRGNSLNCDCKVKWLVEWLAHTNTTVAPIYCASPPRFQEHKVQDLPLREFDCITTDFVLYQTLSFPAVSAEPFLYSSDLYLALAQPGVSACTILKWDYVERQLRDYDRIPAPSAVHCKPMVVDSQLYVVVAQLFGGSYIYHWDPNTTRFTKLQDIDPQRVRKPNDLEAFRIDGDWYFAVADSSKAGATSLYRWHQNGFYSHQALHPWHRDTDLEFVDGEGKPRLIVSNSSQAPVIYQWSRTQKQFVAQGEVTQVPDAQAVKHFRAGRDSYLCLSRYIGDSKILRWEGTRFSEVQALPSRGSLALQPFLVGGRRYLALGSDFSFTQIYQWDEGRQKFVRFQELAVQAPRAFCYMPAGDAQLLLAPSFKGQTLVYRHVVVDLSA.

The signal sequence occupies residues 1–30; it reads MAGLRARRGPAPGLLALSALGFCLMLQVSA. Positions 31–64 constitute an LRRNT domain; sequence KRLPKTPPCPPSCSCTRDTAFCVDSKAVPRNLPS. 3 LRR repeats span residues 89–110, 113–134, and 137–158; these read LLQF…AFTG, HLQY…TFRG, and SLTH…IFRP. Positions 170 to 220 constitute an LRRCT domain; sequence NSLNCDCKVKWLVEWLAHTNTTVAPIYCASPPRFQEHKVQDLPLREFDCIT. N-linked (GlcNAc...) asparagine glycosylation is present at Asn189. EAR repeat units follow at residues 222–264 and 268–310; these read DFVL…KWDY and QLRD…HWDP. Asn311 is a glycosylation site (N-linked (GlcNAc...) asparagine). EAR repeat units lie at residues 314-361, 363-406, 410-453, 455-497, and 501-543; these read RFTK…RWHQ, GFYS…QWSR, QFVA…RWEG, RFSE…QWDE, and KFVR…RHVV. A glycan (N-linked (GlcNAc...) asparagine) is linked at Asn394.

As to quaternary structure, interacts with STX1A.

It localises to the secreted. Its subcellular location is the cytoplasmic vesicle. The protein localises to the secretory vesicle. The protein resides in the synaptic vesicle. It is found in the synapse. It localises to the synaptosome. Its function is as follows. May participate in the regulation of neuronal exocytosis. This chain is Leucine-rich repeat LGI family member 3 (LGI3), found in Macaca fascicularis (Crab-eating macaque).